Consider the following 396-residue polypeptide: Elongation factor Tu 2 (396 aa).

The 197-residue stretch at 10–206 (KPHVNVGTIG…ALDSYIPLPE (197 aa)) folds into the tr-type G domain. A G1 region spans residues 19 to 26 (GHVDHGKT). 19–26 (GHVDHGKT) is a binding site for GTP. A Mg(2+)-binding site is contributed by T26. The G2 stretch occupies residues 60–64 (GITIN). Positions 81 to 84 (DCPG) are G3. GTP contacts are provided by residues 81-85 (DCPGH) and 136-139 (NKCD). The segment at 136–139 (NKCD) is G4. The G5 stretch occupies residues 174 to 176 (SAK).

Belongs to the TRAFAC class translation factor GTPase superfamily. Classic translation factor GTPase family. EF-Tu/EF-1A subfamily. As to quaternary structure, monomer.

It is found in the cytoplasm. The catalysed reaction is GTP + H2O = GDP + phosphate + H(+). Its function is as follows. GTP hydrolase that promotes the GTP-dependent binding of aminoacyl-tRNA to the A-site of ribosomes during protein biosynthesis. The polypeptide is Elongation factor Tu 2 (Albidiferax ferrireducens (strain ATCC BAA-621 / DSM 15236 / T118) (Rhodoferax ferrireducens)).